The following is a 379-amino-acid chain: Cytochrome b (379 aa).

Transmembrane regions (helical) follow at residues 33-53, 77-98, 113-133, and 178-198; these read FGSLLGACLIIQILTGLFLAM, WLIRYLHANGASMFFICLSIHA, WNIGIILFLTTMATAFVGYVL, and FFAFHFILPFIITAFVLVHLL. The heme b site is built by His83 and His97. Heme b-binding residues include His182 and His196. A ubiquinone is bound at residue His201. 4 helical membrane-spanning segments follow: residues 226–246, 288–308, 320–340, and 347–367; these read IKDLLGVFLLLLALMILALFF, LGGVLALILSILILAAFPLLN, ITQTIYWIFIANLLVLTWIGG, and FTMIGQIASITYFAIILILMP.

This sequence belongs to the cytochrome b family. The cytochrome bc1 complex contains 11 subunits: 3 respiratory subunits (MT-CYB, CYC1 and UQCRFS1), 2 core proteins (UQCRC1 and UQCRC2) and 6 low-molecular weight proteins (UQCRH/QCR6, UQCRB/QCR7, UQCRQ/QCR8, UQCR10/QCR9, UQCR11/QCR10 and a cleavage product of UQCRFS1). This cytochrome bc1 complex then forms a dimer. Requires heme b as cofactor.

The protein localises to the mitochondrion inner membrane. In terms of biological role, component of the ubiquinol-cytochrome c reductase complex (complex III or cytochrome b-c1 complex) that is part of the mitochondrial respiratory chain. The b-c1 complex mediates electron transfer from ubiquinol to cytochrome c. Contributes to the generation of a proton gradient across the mitochondrial membrane that is then used for ATP synthesis. This Thaptomys nigrita (Blackish grass mouse) protein is Cytochrome b (MT-CYB).